The following is a 394-amino-acid chain: MNKQSVRDVELQGKKVFCRVDFNVPMKDGVVTDDTRIRAALPTIQLLAEKGARIILASHLGRPKGEVVEELRLDPVAARLQELLGKPVAKVNVAHGPEAEQAANELKDGDVLLLENVRFYPGEEKNDPELAKAFASLADVYVNDAFGAAHRAHASTEGIAHHVTAVAGLLMEKELEVLGKALSNPERPFTAIIGGAKVKDKIGVIENLLDKVDNLIIGGGLAYTFIKAQGHEIGKSLLEADKMDLALSFMEKAKEKGVNFYVPQDAIVADDFSNDANTKAVDIDQIPADWEALDIGPKTRETYRNVIQSSKLVIWNGPMGVFELDAFAGGTKAVAEALADANDTYSVIGGGDSAAAVEKFGLANQMSHISTGGGASLEFMEGKALPGVVALNDK.

Substrate-binding positions include 21–23, arginine 36, 59–62, arginine 118, and arginine 151; these read DFN and HLGR. At serine 183 the chain carries Phosphoserine. Lysine 201 is a binding site for ATP. Threonine 299 is modified (phosphothreonine). ATP-binding positions include glutamate 323 and 350–353; that span reads GGDS.

The protein belongs to the phosphoglycerate kinase family. Monomer.

It is found in the cytoplasm. It carries out the reaction (2R)-3-phosphoglycerate + ATP = (2R)-3-phospho-glyceroyl phosphate + ADP. Its pathway is carbohydrate degradation; glycolysis; pyruvate from D-glyceraldehyde 3-phosphate: step 2/5. The sequence is that of Phosphoglycerate kinase from Halalkalibacterium halodurans (strain ATCC BAA-125 / DSM 18197 / FERM 7344 / JCM 9153 / C-125) (Bacillus halodurans).